Consider the following 268-residue polypeptide: GTP cyclohydrolase 1 type 2 homolog (268 aa).

His-66, His-67, Asp-105, His-227, and Glu-231 together coordinate a divalent metal cation.

Belongs to the GTP cyclohydrolase I type 2/NIF3 family. Homohexamer.

This Clostridium acetobutylicum (strain ATCC 824 / DSM 792 / JCM 1419 / IAM 19013 / LMG 5710 / NBRC 13948 / NRRL B-527 / VKM B-1787 / 2291 / W) protein is GTP cyclohydrolase 1 type 2 homolog.